Here is a 222-residue protein sequence, read N- to C-terminus: MQPLSPAFIDQLCFDDIGLIPAISQDWLDGAVLMMAWMNRTALEQTLKSGQVHYWSRSRQELWHKGATSGHTQILKGIRYDCDADVLLLSIEQTGLVSCHTGARSCFFAEVNQHSQGDSLTLPPPMDACSELFRVIDQRHTTPEANSYTNKLLEGGDNRILKKIGEESAEFVMACKDDDEKAIANEAADLLFHLQVALAHHGVNWRDVLEVLANRRGAPRRN.

The segment at 1-128 (MQPLSPAFID…SLTLPPPMDA (128 aa)) is phosphoribosyl-AMP cyclohydrolase. Residues 129–222 (CSELFRVIDQ…ANRRGAPRRN (94 aa)) are phosphoribosyl-ATP pyrophosphohydrolase.

It in the N-terminal section; belongs to the PRA-CH family. In the C-terminal section; belongs to the PRA-PH family.

The protein resides in the cytoplasm. The enzyme catalyses 1-(5-phospho-beta-D-ribosyl)-ATP + H2O = 1-(5-phospho-beta-D-ribosyl)-5'-AMP + diphosphate + H(+). The catalysed reaction is 1-(5-phospho-beta-D-ribosyl)-5'-AMP + H2O = 1-(5-phospho-beta-D-ribosyl)-5-[(5-phospho-beta-D-ribosylamino)methylideneamino]imidazole-4-carboxamide. It participates in amino-acid biosynthesis; L-histidine biosynthesis; L-histidine from 5-phospho-alpha-D-ribose 1-diphosphate: step 2/9. Its pathway is amino-acid biosynthesis; L-histidine biosynthesis; L-histidine from 5-phospho-alpha-D-ribose 1-diphosphate: step 3/9. The chain is Histidine biosynthesis bifunctional protein HisIE from Prochlorococcus marinus (strain MIT 9313).